Here is a 534-residue protein sequence, read N- to C-terminus: MSEVANEASRRRTFAIISHPDAGKTTLTEKLLLFGGAIQMAGSVKGRKAARHATSDWMALEKERGISVTSSVMQFPYEDKIVNLLDTPGHADFGEDTYRVLTAVDSALMVIDVAKGVEERTIKLMEVCRLRDTPIMTFINKLDREGKDPIELLDEVETVLGIQCAPVTWPIGMGQRLKGVVHLLTGEVHLYEPGRNFTRQDSTIFPSIDAPGLAEKIGAQMLADLRDELELVQGASHPFDLEAYRAGKQTPVFFGSGVNNFGVQPLLDFFVEHAPSPQARSTTGREIAPEENKLTGFVFKIQANMDPQHRDRVAFMRVCSGRFSAGMKTFHVRTGKEMKLANALTFMASDREIAAEAWPGDVIGIHNHGTISIGDTFTEGEAVTFTGIPNFAPELFRRARLRDPLKLKQLQKGLAQLSEEGATQFFRPLTSNDLILGAVGVLQFDVAAYRLKDEYGVEATFEPVSVTTARWVHCSNEKKLEEFREKNALNLALDAAGHLVYLAPTRVNLQLAQERSPDVRFSATREAAHTVSVG.

In terms of domain architecture, tr-type G spans 9–278 (SRRRTFAIIS…FFVEHAPSPQ (270 aa)). Residues 18 to 25 (SHPDAGKT), 86 to 90 (DTPGH), and 140 to 143 (NKLD) each bind GTP.

Belongs to the TRAFAC class translation factor GTPase superfamily. Classic translation factor GTPase family. PrfC subfamily.

Its subcellular location is the cytoplasm. In terms of biological role, increases the formation of ribosomal termination complexes and stimulates activities of RF-1 and RF-2. It binds guanine nucleotides and has strong preference for UGA stop codons. It may interact directly with the ribosome. The stimulation of RF-1 and RF-2 is significantly reduced by GTP and GDP, but not by GMP. This Stenotrophomonas maltophilia (strain K279a) protein is Peptide chain release factor 3.